A 35-amino-acid polypeptide reads, in one-letter code: Cupiennin-1a (35 aa).

The residue at position 35 (Glu-35) is a Glutamic acid 1-amide.

Belongs to the cationic peptide 04 (cupiennin) family. 01 subfamily. Monomer. Interacts with CSTX-1 (AC P81694), CSTX-9 (AC P58604), and CSTX-13 (AC P83919). As to expression, expressed by the venom gland.

The protein localises to the secreted. Has antimicrobial activity against B.subtilis, E.coli, E.faecalis, P.denitrificans, P.aeruginosa, P.putida, S.aureus, and S.epidermidis. Shows insecticidal and hemolytic activities. Probably acts by disturbing membrane function with its amphipathic structure. Synergistically increases the insecticidal activity of CSTX-1 (AC P81694), CSTX-9 (AC P58604), and CSTX-13 (AC P83919) by up to 65%. Also inhibits the formation of nitric oxide by neuronal nitric oxide synthase. The sequence is that of Cupiennin-1a from Cupiennius salei (American wandering spider).